The primary structure comprises 483 residues: Proline--tRNA ligase (483 aa).

Belongs to the class-II aminoacyl-tRNA synthetase family. ProS type 3 subfamily. Homodimer.

Its subcellular location is the cytoplasm. The catalysed reaction is tRNA(Pro) + L-proline + ATP = L-prolyl-tRNA(Pro) + AMP + diphosphate. Its function is as follows. Catalyzes the attachment of proline to tRNA(Pro) in a two-step reaction: proline is first activated by ATP to form Pro-AMP and then transferred to the acceptor end of tRNA(Pro). The polypeptide is Proline--tRNA ligase (Sulfurisphaera tokodaii (strain DSM 16993 / JCM 10545 / NBRC 100140 / 7) (Sulfolobus tokodaii)).